The chain runs to 141 residues: Putative phosphatidylglycerol/phosphatidylinositol transfer protein DDB_G0278295 (141 aa).

The N-terminal stretch at 1-19 is a signal peptide; that stretch reads MRLLLALFFVLALVSPSFT. N82 and N104 each carry an N-linked (GlcNAc...) asparagine glycan.

The protein belongs to the NPC2 family. In terms of assembly, monomer.

Its function is as follows. Catalyzes the intermembrane transfer of phosphatidylglycerol and phosphatidylinositol. The sequence is that of Putative phosphatidylglycerol/phosphatidylinositol transfer protein DDB_G0278295 from Dictyostelium discoideum (Social amoeba).